The following is a 273-amino-acid chain: Cytoplasmic phosphatidylinositol transfer protein 1 (273 aa).

A disordered region spans residues Gln244–Asp273.

This sequence belongs to the PtdIns transfer protein family. PI transfer class IIB subfamily.

Functionally, phosphatidylinositol transfer proteins mediate the monomeric transport of lipids by shielding a lipid from the aqueous environment and binding the lipid in a hydrophobic cavity. The sequence is that of Cytoplasmic phosphatidylinositol transfer protein 1 (rdgBbeta) from Drosophila melanogaster (Fruit fly).